A 382-amino-acid chain; its full sequence is Pyrimidine monooxygenase RutA (382 aa).

FMN contacts are provided by residues 68–69 (IK), N134, E143, 159–160 (RY), and S209.

It belongs to the NtaA/SnaA/DszA monooxygenase family. RutA subfamily.

The enzyme catalyses uracil + FMNH2 + NADH + O2 = (Z)-3-ureidoacrylate + FMN + NAD(+) + H2O + H(+). It carries out the reaction thymine + FMNH2 + NADH + O2 = (Z)-2-methylureidoacrylate + FMN + NAD(+) + H2O + H(+). Functionally, catalyzes the pyrimidine ring opening between N-3 and C-4 by an unusual flavin hydroperoxide-catalyzed mechanism, adding oxygen atoms in the process to yield ureidoacrylate peracid, that immediately reacts with FMN forming ureidoacrylate and FMN-N(5)-oxide. The FMN-N(5)-oxide reacts spontaneously with NADH to produce FMN. Requires the flavin reductase RutF to regenerate FMN in vivo. This is Pyrimidine monooxygenase RutA from Escherichia coli O150:H5 (strain SE15).